A 305-amino-acid polypeptide reads, in one-letter code: Putative glutamine amidotransferase MTH_191 (305 aa).

Residue C2 is part of the active site. One can recognise a Glutamine amidotransferase type-2 domain in the interval 2 to 305 (CGIAGVVYKD…SPGEVRVYEI (304 aa)).

The sequence is that of Putative glutamine amidotransferase MTH_191 from Methanothermobacter thermautotrophicus (strain ATCC 29096 / DSM 1053 / JCM 10044 / NBRC 100330 / Delta H) (Methanobacterium thermoautotrophicum).